The following is a 272-amino-acid chain: uncharacterized protein (272 aa).

NAD(+) is bound by residues 12 to 34 (FITG…DGAN), 39 to 40 (DI), 77 to 78 (DV), and Asn-104. Ser-153 provides a ligand contact to substrate. Residue Tyr-170 is the Proton acceptor of the active site. Residues Lys-174 and 203 to 205 (VDT) each bind NAD(+).

This sequence belongs to the short-chain dehydrogenases/reductases (SDR) family.

This is an uncharacterized protein from Mycobacterium tuberculosis (strain CDC 1551 / Oshkosh).